A 173-amino-acid chain; its full sequence is MKTKKFSNKNKINEMITAKKVKLVDQNSVMIGVVDIEEALSRAKAVNLDLVEIVHDDQYPLCKIFDYSKYRYSHKKKISDSKKKQKTIIVKELKFKLNIGDNDYNVKLNMLRGFIERGDKVKISLRFIGREILHPEVGMEIIERLIRDTADIAKPENLPKKEGNIINMVLTAK.

It belongs to the IF-3 family. As to quaternary structure, monomer.

It localises to the cytoplasm. Functionally, IF-3 binds to the 30S ribosomal subunit and shifts the equilibrium between 70S ribosomes and their 50S and 30S subunits in favor of the free subunits, thus enhancing the availability of 30S subunits on which protein synthesis initiation begins. This is Translation initiation factor IF-3 from Ehrlichia chaffeensis (strain ATCC CRL-10679 / Arkansas).